The sequence spans 300 residues: Acetylglutamate kinase (300 aa).

Substrate is bound by residues 72 to 73 (GG), R94, and N197.

Belongs to the acetylglutamate kinase family. ArgB subfamily.

Its subcellular location is the cytoplasm. The enzyme catalyses N-acetyl-L-glutamate + ATP = N-acetyl-L-glutamyl 5-phosphate + ADP. It participates in amino-acid biosynthesis; L-arginine biosynthesis; N(2)-acetyl-L-ornithine from L-glutamate: step 2/4. Its function is as follows. Catalyzes the ATP-dependent phosphorylation of N-acetyl-L-glutamate. In Aromatoleum aromaticum (strain DSM 19018 / LMG 30748 / EbN1) (Azoarcus sp. (strain EbN1)), this protein is Acetylglutamate kinase.